We begin with the raw amino-acid sequence, 461 residues long: Tip elongation protein 1 (461 aa).

The 48-residue stretch at 22–69 (GEVENRKGVYVGLELLPEFAEFGKNRGVVDGREYFKTKNNEKTGIFVP) folds into the CAP-Gly domain. 5 positions are modified to phosphoserine: serine 82, serine 84, serine 289, serine 294, and serine 305. The stretch at 134-418 (TEKILQKRIE…RMSPAEFELE (285 aa)) forms a coiled coil. The segment covering 278–303 (KANSSTANEKLSHMESSSPTLTNASF) has biased composition (polar residues). The disordered stretch occupies residues 278–323 (KANSSTANEKLSHMESSSPTLTNASFESPKRGKGSNDLPENHPQRR). The residue at position 367 (threonine 367) is a Phosphothreonine. The disordered stretch occupies residues 417-437 (LETTQEVEENDSDSHDDEETW).

Monomer. Interacts with tea1 and tea2. Interacts with tea4 in the presence of tea1.

It localises to the cytoplasm. It is found in the cytoskeleton. Its function is as follows. Has a role in stabilizing and targeting the growing tips of the microtubules along the long axis of the cell, directing them to the ends of the cell. Acts as a cargo for tea2. The polypeptide is Tip elongation protein 1 (tip1) (Schizosaccharomyces pombe (strain 972 / ATCC 24843) (Fission yeast)).